A 386-amino-acid chain; its full sequence is ORC1-type DNA replication protein 3 (386 aa).

ATP-binding positions include 65 to 69 and Tyr-206; that span reads TGKTF.

The protein belongs to the CDC6/cdc18 family.

In terms of biological role, involved in regulation of DNA replication. This chain is ORC1-type DNA replication protein 3 (cdc6-3), found in Sulfurisphaera tokodaii (strain DSM 16993 / JCM 10545 / NBRC 100140 / 7) (Sulfolobus tokodaii).